The primary structure comprises 533 residues: Light-independent protochlorophyllide reductase subunit B (533 aa).

D36 is a [4Fe-4S] cluster binding site. D292 acts as the Proton donor in catalysis. 428–429 (GL) contributes to the substrate binding site.

The protein belongs to the ChlB/BchB/BchZ family. Protochlorophyllide reductase is composed of three subunits; BchL, BchN and BchB. Forms a heterotetramer of two BchB and two BchN subunits. [4Fe-4S] cluster serves as cofactor.

The enzyme catalyses chlorophyllide a + oxidized 2[4Fe-4S]-[ferredoxin] + 2 ADP + 2 phosphate = protochlorophyllide a + reduced 2[4Fe-4S]-[ferredoxin] + 2 ATP + 2 H2O. The protein operates within porphyrin-containing compound metabolism; bacteriochlorophyll biosynthesis (light-independent). Its function is as follows. Component of the dark-operative protochlorophyllide reductase (DPOR) that uses Mg-ATP and reduced ferredoxin to reduce ring D of protochlorophyllide (Pchlide) to form chlorophyllide a (Chlide). This reaction is light-independent. The NB-protein (BchN-BchB) is the catalytic component of the complex. The polypeptide is Light-independent protochlorophyllide reductase subunit B (Prosthecochloris aestuarii (strain DSM 271 / SK 413)).